We begin with the raw amino-acid sequence, 295 residues long: 4-hydroxy-tetrahydrodipicolinate synthase (295 aa).

Position 47 (Thr-47) interacts with pyruvate. Tyr-135 acts as the Proton donor/acceptor in catalysis. The Schiff-base intermediate with substrate role is filled by Lys-163. Ile-206 contacts pyruvate.

It belongs to the DapA family. Homodimer.

Its subcellular location is the cytoplasm. The enzyme catalyses L-aspartate 4-semialdehyde + pyruvate = (2S,4S)-4-hydroxy-2,3,4,5-tetrahydrodipicolinate + H2O + H(+). It participates in amino-acid biosynthesis; L-lysine biosynthesis via DAP pathway; (S)-tetrahydrodipicolinate from L-aspartate: step 3/4. Its function is as follows. Catalyzes the condensation of (S)-aspartate-beta-semialdehyde [(S)-ASA] and pyruvate to 4-hydroxy-tetrahydrodipicolinate (HTPA). This chain is 4-hydroxy-tetrahydrodipicolinate synthase, found in Staphylococcus aureus (strain bovine RF122 / ET3-1).